Consider the following 372-residue polypeptide: Glutamate 5-kinase (372 aa).

Lys14 lines the ATP pocket. Residues Ser54, Asp141, and Asn153 each coordinate substrate. Position 173–174 (173–174 (TD)) interacts with ATP. Positions 280–358 (RGNVTLDEGA…DEIESLLGYI (79 aa)) constitute a PUA domain.

This sequence belongs to the glutamate 5-kinase family.

The protein localises to the cytoplasm. It catalyses the reaction L-glutamate + ATP = L-glutamyl 5-phosphate + ADP. Its pathway is amino-acid biosynthesis; L-proline biosynthesis; L-glutamate 5-semialdehyde from L-glutamate: step 1/2. Catalyzes the transfer of a phosphate group to glutamate to form L-glutamate 5-phosphate. The polypeptide is Glutamate 5-kinase (Nitrosospira multiformis (strain ATCC 25196 / NCIMB 11849 / C 71)).